Reading from the N-terminus, the 293-residue chain is MWSVMGLVRRTAMSSTVNKASPVRSLLGGFRCLNVESKEEDEKKDMTVLEAKKLMRLVNVEDMKKKLIGMGDKEMVTYTTLIEASQGLGIARSLDEAHAFARVLDDAGVILIFRDKVYLHPHKVVDLIRKAVPLGLNPDDELIREEFDKMRSMKEEIDVLAHQQVRKILWGGLGYSVVQIGIFVRLTFWEFSWDVMEPITFFTTATGIIVGYAYFLMTSRDPTYQDFMKRLFLSRQRKLLKSHKFDAERFKELENKWKITSCSSSSCHANASIRNRVGVDLDLEDSLQSHHRD.

Residues 1–33 (MWSVMGLVRRTAMSSTVNKASPVRSLLGGFRCL) constitute a mitochondrion transit peptide. The chain crosses the membrane as a helical span at residues 168–188 (ILWGGLGYSVVQIGIFVRLTF). A Selectivity filter motif is present at residues 193–201 (WDVMEPITF). E197 lines the Ca(2+) pocket. The helical transmembrane segment at 198 to 218 (PITFFTTATGIIVGYAYFLMT) threads the bilayer.

The protein belongs to the MCU (TC 1.A.77) family.

It is found in the mitochondrion inner membrane. The catalysed reaction is Ca(2+)(in) = Ca(2+)(out). In terms of biological role, mitochondrial inner membrane calcium uniporter that mediates calcium uptake into mitochondria. Constitutes a pore-forming and calcium-conducting subunit. Mitochondrial calcium homeostasis plays key roles in cellular physiology and regulates cell bioenergetics, cytoplasmic calcium signals and activation of cell death pathways. The polypeptide is Calcium uniporter protein 2, mitochondrial (Arabidopsis thaliana (Mouse-ear cress)).